We begin with the raw amino-acid sequence, 248 residues long: Mitochondrial import inner membrane translocase subunit Tim21 (248 aa).

A mitochondrion-targeting transit peptide spans 1 to 18 (MICTFLRAVQYTEKLHRS). A disordered region spans residues 67 to 98 (TQGPSPRKAKEDGSKQVSVHRSQRGGTAVPTS). Residues 108–128 (FTYLIVVLFGISITGGLFYTI) form a helical membrane-spanning segment.

It belongs to the TIM21 family. In terms of assembly, component of the TIM23 complex. Component of the MITRAC (mitochondrial translation regulation assembly intermediate of cytochrome c oxidase complex) complex, the core components of this complex being COA3/MITRAC12 and COX14. Interacts with COA3 and MT-CO1/COX1.

It is found in the mitochondrion membrane. In terms of biological role, participates in the translocation of transit peptide-containing proteins across the mitochondrial inner membrane. Also required for assembly of mitochondrial respiratory chain complex I and complex IV as component of the MITRAC (mitochondrial translation regulation assembly intermediate of cytochrome c oxidase complex) complex. Probably shuttles between the presequence translocase and respiratory-chain assembly intermediates in a process that promotes incorporation of early nuclear-encoded subunits into these complexes. In Homo sapiens (Human), this protein is Mitochondrial import inner membrane translocase subunit Tim21 (TIMM21).